Here is a 225-residue protein sequence, read N- to C-terminus: Transcriptional activator protein CUP2 (225 aa).

The segment at residues 1-40 (MVVINGVKYACETCIRGHRAAQCTHTDGPLQMIRRKGRPS) is a DNA-binding region (copper-fist). The binds copper and DNA stretch occupies residues 1–108 (MVVINGVKYA…KSKGGSCHRR (108 aa)). C11, C14, C23, and H25 together coordinate Zn(2+). Residues 109 to 225 (ANDEAAHVNG…QVSSHNSHSQ (117 aa)) form a required for transcriptional activation region.

Its subcellular location is the nucleus. In terms of biological role, trans-acting regulatory protein that activates transcription of the CUP1 gene (metallothionein) in response to copper ions. Binds to the CUP1 UAS sequence 5'-GCTTCTTTTCCGCTGA-3'. Binds DNA only in presence of copper or silver. Copper seems to alter the conformation of the protein. This is Transcriptional activator protein CUP2 (CUP2) from Saccharomyces cerevisiae (strain ATCC 204508 / S288c) (Baker's yeast).